The following is a 372-amino-acid chain: Cobalt-precorrin-5B C(1)-methyltransferase (372 aa).

Belongs to the CbiD family.

The enzyme catalyses Co-precorrin-5B + S-adenosyl-L-methionine = Co-precorrin-6A + S-adenosyl-L-homocysteine. The protein operates within cofactor biosynthesis; adenosylcobalamin biosynthesis; cob(II)yrinate a,c-diamide from sirohydrochlorin (anaerobic route): step 6/10. Catalyzes the methylation of C-1 in cobalt-precorrin-5B to form cobalt-precorrin-6A. This chain is Cobalt-precorrin-5B C(1)-methyltransferase, found in Geobacillus thermodenitrificans (strain NG80-2).